The chain runs to 161 residues: Troponin C, slow skeletal and cardiac muscles (161 aa).

An N-acetylmethionine modification is found at methionine 1. EF-hand domains follow at residues 16–51 (QKNE…LGQN), 52–87 (PTPE…CMKD), 92–127 (KTEE…TGET), and 128–161 (ITED…KGVE). Residues aspartate 65, aspartate 67, serine 69, threonine 71, aspartate 105, asparagine 107, aspartate 109, tyrosine 111, glutamate 116, asparagine 143, aspartate 145, arginine 147, and glutamate 152 each coordinate Ca(2+).

This sequence belongs to the troponin C family.

Its function is as follows. Troponin is the central regulatory protein of striated muscle contraction. Tn consists of three components: Tn-I which is the inhibitor of actomyosin ATPase, Tn-T which contains the binding site for tropomyosin and Tn-C. The binding of calcium to Tn-C abolishes the inhibitory action of Tn on actin filaments. In Coturnix japonica (Japanese quail), this protein is Troponin C, slow skeletal and cardiac muscles (TNNC1).